The chain runs to 344 residues: Succinylglutamate desuccinylase (344 aa).

Zn(2+)-binding residues include histidine 63, glutamate 66, and histidine 160. Glutamate 224 is a catalytic residue.

Belongs to the AspA/AstE family. Succinylglutamate desuccinylase subfamily. It depends on Zn(2+) as a cofactor.

It catalyses the reaction N-succinyl-L-glutamate + H2O = L-glutamate + succinate. The protein operates within amino-acid degradation; L-arginine degradation via AST pathway; L-glutamate and succinate from L-arginine: step 5/5. Functionally, transforms N(2)-succinylglutamate into succinate and glutamate. In Shewanella sp. (strain MR-7), this protein is Succinylglutamate desuccinylase.